Reading from the N-terminus, the 180-residue chain is Protein NEQ441 (180 aa).

The region spanning 1–180 is the AMMECR1 domain; it reads MNLAKIARKI…VFEGQIFEED (180 aa).

This is Protein NEQ441 from Nanoarchaeum equitans (strain Kin4-M).